The primary structure comprises 2528 residues: Reducing polyketide synthase PKS1 (2528 aa).

The region spanning 11–436 is the Ketosynthase family 3 (KS3) domain; the sequence is ITPIAVVGMS…GANVHAILES (426 aa). Catalysis depends on for beta-ketoacyl synthase activity residues C186, H321, and H359. The segment at 573–868 is malonyl-CoA:ACP transacylase (MAT); that stretch reads FVFTGQGAQW…LGGPISQVID (296 aa). An N-terminal hotdog fold region spans residues 954 to 1092; the sequence is LDLIGVFDVH…GLISVLKSSK (139 aa). The region spanning 954 to 1278 is the PKS/mFAS DH domain; sequence LDLIGVFDVH…LVALDRPNSS (325 aa). Positions 956–1277 are dehydratase (DH) domain; sequence LIGVFDVHSS…TLVALDRPNS (322 aa). The active-site Proton acceptor; for dehydratase activity is H986. The C-terminal hotdog fold stretch occupies residues 1122–1278; it reads KTEWDVKDMY…LVALDRPNSS (157 aa). The active-site Proton donor; for dehydratase activity is D1187. Residues 1827 to 2139 form an enoyl reductase (ER) domain region; the sequence is GLLDSLHFTV…TGRHMGKMVA (313 aa). A ketoreductase (KR) domain region spans residues 2164–2341; the sequence is ASYLLVGGVG…ATVIDIGAVH (178 aa). The Carrier domain maps to 2442-2519; it reads SAVTIVLSAL…ALAVKIAARS (78 aa). S2479 carries the post-translational modification O-(pantetheine 4'-phosphoryl)serine.

The protein operates within mycotoxin biosynthesis. Reducing polyketide synthase (PKS); part of the Tox1A locus, one of the 2 loci that mediate the biosynthesis of T-toxin, a family of linear polyketides 37 to 45 carbons in length, of which the major component is 41 carbons, and which leads to high virulence to maize. One of the PKSs (PKS1 or PKS2) could synthesize a precursor, used subsequently by the other PKS as starter unit, to add additional carbons. Variability in the length of the final carbon backbone C35-47 could be achieved by varying the number of condensation cycles, or use of different starter or extender units or might be due to decarboxylation of the penultimate product, catalyzed by DEC1. Additional proteins are required for the biosynthesis of T-toxin, including oxidoreductases RED1, RED2, RED3, LAM1 and OXI1, as well as esterase TOX9. This is Reducing polyketide synthase PKS1 from Cochliobolus heterostrophus (strain C4 / ATCC 48331 / race T) (Southern corn leaf blight fungus).